The chain runs to 82 residues: Antitoxin MazE8 (82 aa).

In terms of assembly, forms a complex with cognate toxin MazF8.

Its function is as follows. Antitoxin component of a type II toxin-antitoxin (TA) system. Its cognate toxin is MazF8. This is Antitoxin MazE8 (mazE8) from Mycobacterium tuberculosis (strain ATCC 25618 / H37Rv).